The chain runs to 398 residues: Tryptophan synthase beta chain (398 aa).

Position 88 is an N6-(pyridoxal phosphate)lysine (Lys88).

This sequence belongs to the TrpB family. Tetramer of two alpha and two beta chains. Pyridoxal 5'-phosphate is required as a cofactor.

It carries out the reaction (1S,2R)-1-C-(indol-3-yl)glycerol 3-phosphate + L-serine = D-glyceraldehyde 3-phosphate + L-tryptophan + H2O. Its pathway is amino-acid biosynthesis; L-tryptophan biosynthesis; L-tryptophan from chorismate: step 5/5. In terms of biological role, the beta subunit is responsible for the synthesis of L-tryptophan from indole and L-serine. This is Tryptophan synthase beta chain from Histophilus somni (strain 2336) (Haemophilus somnus).